The sequence spans 103 residues: Large ribosomal subunit protein bL21 (103 aa).

It belongs to the bacterial ribosomal protein bL21 family. Part of the 50S ribosomal subunit. Contacts protein L20.

This protein binds to 23S rRNA in the presence of protein L20. This Bordetella petrii (strain ATCC BAA-461 / DSM 12804 / CCUG 43448) protein is Large ribosomal subunit protein bL21.